Consider the following 315-residue polypeptide: N-acetylneuraminate lyase (315 aa).

Residues Ser59 and Ser60 each coordinate aceneuramate. Catalysis depends on Tyr149, which acts as the Proton donor. Lys177 functions as the Schiff-base intermediate with substrate in the catalytic mechanism. Aceneuramate contacts are provided by Ser179, Gly202, Asp204, Glu205, and Gly221.

It belongs to the DapA family. NanA subfamily. In terms of assembly, homotetramer.

The protein localises to the cytoplasm. It carries out the reaction aceneuramate = aldehydo-N-acetyl-D-mannosamine + pyruvate. It functions in the pathway amino-sugar metabolism; N-acetylneuraminate degradation; D-fructose 6-phosphate from N-acetylneuraminate: step 1/5. In terms of biological role, catalyzes the reversible aldol cleavage of N-acetylneuraminic acid (sialic acid; Neu5Ac) to form pyruvate and N-acetylmannosamine (ManNAc) via a Schiff base intermediate. Cannot use 2,7-anhydro-Neu5Ac. Involved in the degradation of sialic acid, which is present in the host mucus layer and represents a much-coveted source of nutrients for R.gnavus, a prevalent member of the normal gut microbiota. The chain is N-acetylneuraminate lyase from Mediterraneibacter gnavus (strain ATCC 29149 / DSM 114966 / JCM 6515 / VPI C7-9) (Ruminococcus gnavus).